Reading from the N-terminus, the 365-residue chain is Peptide chain release factor 2 (365 aa).

Glutamine 252 carries the N5-methylglutamine modification.

It belongs to the prokaryotic/mitochondrial release factor family. In terms of processing, methylated by PrmC. Methylation increases the termination efficiency of RF2.

Its subcellular location is the cytoplasm. In terms of biological role, peptide chain release factor 2 directs the termination of translation in response to the peptide chain termination codons UGA and UAA. This chain is Peptide chain release factor 2 (prfB), found in Salmonella typhimurium (strain LT2 / SGSC1412 / ATCC 700720).